A 371-amino-acid chain; its full sequence is Chaperone protein DnaJ (371 aa).

Positions 6-71 (DYYEILGVEK…QKRAQYDRFG (66 aa)) constitute a J domain. A disordered region spans residues 104 to 123 (GGMGGQQRQRRNRNEPRRGS). Residues 139-217 (GIEKEIEFDT…CKGKGRVAEH (79 aa)) form a CR-type zinc finger. Cysteine 152, cysteine 155, cysteine 169, cysteine 172, cysteine 191, cysteine 194, cysteine 205, and cysteine 208 together coordinate Zn(2+). CXXCXGXG motif repeat units lie at residues 152–159 (CDECKGTG), 169–176 (CGTCGGSG), 191–198 (CPTCHGQG), and 205–212 (CKPCKGKG).

The protein belongs to the DnaJ family. In terms of assembly, homodimer. Zn(2+) is required as a cofactor.

It is found in the cytoplasm. Its function is as follows. Participates actively in the response to hyperosmotic and heat shock by preventing the aggregation of stress-denatured proteins and by disaggregating proteins, also in an autonomous, DnaK-independent fashion. Unfolded proteins bind initially to DnaJ; upon interaction with the DnaJ-bound protein, DnaK hydrolyzes its bound ATP, resulting in the formation of a stable complex. GrpE releases ADP from DnaK; ATP binding to DnaK triggers the release of the substrate protein, thus completing the reaction cycle. Several rounds of ATP-dependent interactions between DnaJ, DnaK and GrpE are required for fully efficient folding. Also involved, together with DnaK and GrpE, in the DNA replication of plasmids through activation of initiation proteins. The chain is Chaperone protein DnaJ from Bdellovibrio bacteriovorus (strain ATCC 15356 / DSM 50701 / NCIMB 9529 / HD100).